A 95-amino-acid polypeptide reads, in one-letter code: Trypomastigote decay-accelerating factor (95 aa).

This sequence belongs to the receptors of complement activation (RCA) family.

Its function is as follows. Interferes with the efficient assembly of the host C3 convertase. Could protect parasites from complement-mediated lysis by sera from a number of different species. The sequence is that of Trypomastigote decay-accelerating factor from Trypanosoma cruzi.